The sequence spans 215 residues: Cytochrome b6 (215 aa).

A helical membrane pass occupies residues 32 to 52; that stretch reads IFYCLGGITLTCFLVQVATGF. Cys35 provides a ligand contact to heme c. Residues His86 and His100 each contribute to the heme b site. Helical transmembrane passes span 90–110, 116–136, and 186–206; these read ASMM…TGGF, LTWV…VTGY, and LHTF…FPMI. Heme b-binding residues include His187 and His202.

Belongs to the cytochrome b family. PetB subfamily. In terms of assembly, the 4 large subunits of the cytochrome b6-f complex are cytochrome b6, subunit IV (17 kDa polypeptide, PetD), cytochrome f and the Rieske protein, while the 4 small subunits are PetG, PetL, PetM and PetN. The complex functions as a dimer. Requires heme b as cofactor. It depends on heme c as a cofactor.

Its subcellular location is the plastid. The protein localises to the chloroplast thylakoid membrane. Functionally, component of the cytochrome b6-f complex, which mediates electron transfer between photosystem II (PSII) and photosystem I (PSI), cyclic electron flow around PSI, and state transitions. This Lactuca sativa (Garden lettuce) protein is Cytochrome b6.